Reading from the N-terminus, the 380-residue chain is Glucose-1-phosphate adenylyltransferase (380 aa).

Alpha-D-glucose 1-phosphate contacts are provided by residues glycine 164, 179–180 (EK), and serine 190.

The protein belongs to the bacterial/plant glucose-1-phosphate adenylyltransferase family. In terms of assembly, homotetramer.

The enzyme catalyses alpha-D-glucose 1-phosphate + ATP + H(+) = ADP-alpha-D-glucose + diphosphate. It participates in glycan biosynthesis; glycogen biosynthesis. Involved in the biosynthesis of ADP-glucose, a building block required for the elongation reactions to produce glycogen. Catalyzes the reaction between ATP and alpha-D-glucose 1-phosphate (G1P) to produce pyrophosphate and ADP-Glc. In Streptococcus pneumoniae (strain 70585), this protein is Glucose-1-phosphate adenylyltransferase.